Consider the following 294-residue polypeptide: Cytidine deaminase (294 aa).

2 CMP/dCMP-type deaminase domains span residues 48 to 168 (DEDA…FGPK) and 186 to 294 (LTGD…VLLG). Position 89 to 91 (89 to 91 (NME)) interacts with substrate. Zn(2+) is bound at residue H102. Residue E104 is the Proton donor of the active site. Residues C129 and C132 each coordinate Zn(2+).

The protein belongs to the cytidine and deoxycytidylate deaminase family. As to quaternary structure, homodimer. It depends on Zn(2+) as a cofactor.

The catalysed reaction is cytidine + H2O + H(+) = uridine + NH4(+). It catalyses the reaction 2'-deoxycytidine + H2O + H(+) = 2'-deoxyuridine + NH4(+). Its function is as follows. This enzyme scavenges exogenous and endogenous cytidine and 2'-deoxycytidine for UMP synthesis. The protein is Cytidine deaminase of Escherichia fergusonii (strain ATCC 35469 / DSM 13698 / CCUG 18766 / IAM 14443 / JCM 21226 / LMG 7866 / NBRC 102419 / NCTC 12128 / CDC 0568-73).